A 218-amino-acid polypeptide reads, in one-letter code: Peptide deformylase 1 (218 aa).

Fe cation contacts are provided by Cys126 and His168. Glu169 is a catalytic residue. His172 is a Fe cation binding site.

Belongs to the polypeptide deformylase family. It depends on Fe(2+) as a cofactor.

The catalysed reaction is N-terminal N-formyl-L-methionyl-[peptide] + H2O = N-terminal L-methionyl-[peptide] + formate. Functionally, removes the formyl group from the N-terminal Met of newly synthesized proteins. Requires at least a dipeptide for an efficient rate of reaction. N-terminal L-methionine is a prerequisite for activity but the enzyme has broad specificity at other positions. This Streptomyces coelicolor (strain ATCC BAA-471 / A3(2) / M145) protein is Peptide deformylase 1.